A 141-amino-acid polypeptide reads, in one-letter code: Nucleoside diphosphate kinase (141 aa).

ATP contacts are provided by lysine 11, phenylalanine 59, arginine 87, threonine 93, arginine 104, and asparagine 114. Residue histidine 117 is the Pros-phosphohistidine intermediate of the active site.

It belongs to the NDK family. Homotetramer. It depends on Mg(2+) as a cofactor.

The protein localises to the cytoplasm. It carries out the reaction a 2'-deoxyribonucleoside 5'-diphosphate + ATP = a 2'-deoxyribonucleoside 5'-triphosphate + ADP. The catalysed reaction is a ribonucleoside 5'-diphosphate + ATP = a ribonucleoside 5'-triphosphate + ADP. Its function is as follows. Major role in the synthesis of nucleoside triphosphates other than ATP. The ATP gamma phosphate is transferred to the NDP beta phosphate via a ping-pong mechanism, using a phosphorylated active-site intermediate. The protein is Nucleoside diphosphate kinase of Acidithiobacillus ferrooxidans (strain ATCC 53993 / BNL-5-31) (Leptospirillum ferrooxidans (ATCC 53993)).